Consider the following 348-residue polypeptide: Chloroacetanilide N-alkylformylase, oxygenase component (348 aa).

The Rieske domain occupies 7–108; sequence WYAVAWCDEV…ARERHKLIWA (102 aa). [2Fe-2S] cluster is bound by residues Cys-47, His-49, Cys-66, and His-69. His-159 and His-164 together coordinate Fe cation. His-250 lines the substrate pocket. Residue Asp-293 coordinates Fe cation.

The chloroacetanilide N-alkylformylase multicomponent enzyme system is composed of an oxygenase component (CndA) and an electron transfer component formed by a ferredoxin reductase (CndC1) and a ferredoxin (CndB1). In vitro, chloroacetanilide N-alkylformylase assays in which CndB1 is substituted for CndB2 demonstrate that the two enzymes possess nearly identical activities. It depends on [2Fe-2S] cluster as a cofactor.

It catalyses the reaction butachlor + 2 reduced [2Fe-2S]-[ferredoxin] + O2 + 2 H(+) = butyl formate + N-(2,6-diethylphenyl)-2-chloroacetamide + 2 oxidized [2Fe-2S]-[ferredoxin] + H2O. The catalysed reaction is alachlor + 2 reduced [2Fe-2S]-[ferredoxin] + O2 + 2 H(+) = methyl formate + N-(2,6-diethylphenyl)-2-chloroacetamide + 2 oxidized [2Fe-2S]-[ferredoxin] + H2O. The enzyme catalyses acetochlor + 2 reduced [2Fe-2S]-[ferredoxin] + O2 + 2 H(+) = N-(2-ethyl-6-methylphenyl)-2-chloroacetamide + ethyl formate + 2 oxidized [2Fe-2S]-[ferredoxin] + H2O. Its activity is regulated as follows. Activity enhanced by Fe(2+) and Mg(2+) ions. Divalent cations such as Ca(2+), Cr(2+), Co(2+), and Mn(2+) show moderate inhibition of the enzyme, whereas heavy metal ions such as Ag(+), Cu(2+), Pb(2+), Hg(2+), Ni(2+) and Zn(2+) severely inhibit the activity. Its function is as follows. Component of the chloroacetanilide N-alkylformylase multicomponent enzyme system involved in the degradation of chloroacetanilide herbicides (N-alkoxyalkyl-N-chloroacetyl-substituted aniline derivatives). In vitro, catalyzes the N-dealkylation of butachlor, alachlor and acetochlor to yield 2-chloro-N-(2,6-diethylphenyl)acetamide (CDEPA) (for alachlor and butachlor) and 2-chloro-N-(2-methyl-6-ethylphenyl)acetamide (CMEPA) (for acetochlor). The chain is Chloroacetanilide N-alkylformylase, oxygenase component from Rhizorhabdus wittichii (strain DC-6 / KACC 16600) (Sphingomonas wittichii).